We begin with the raw amino-acid sequence, 320 residues long: Biotin synthase (320 aa).

Residues 46-275 (NMGRRVDLCS…YAHIRYAGGR (230 aa)) form the Radical SAM core domain. C64, C68, and C71 together coordinate [4Fe-4S] cluster. The [2Fe-2S] cluster site is built by S108, C140, C200, and R270.

Belongs to the radical SAM superfamily. Biotin synthase family. As to quaternary structure, homodimer. [4Fe-4S] cluster serves as cofactor. The cofactor is [2Fe-2S] cluster.

The catalysed reaction is (4R,5S)-dethiobiotin + (sulfur carrier)-SH + 2 reduced [2Fe-2S]-[ferredoxin] + 2 S-adenosyl-L-methionine = (sulfur carrier)-H + biotin + 2 5'-deoxyadenosine + 2 L-methionine + 2 oxidized [2Fe-2S]-[ferredoxin]. It functions in the pathway cofactor biosynthesis; biotin biosynthesis; biotin from 7,8-diaminononanoate: step 2/2. Catalyzes the conversion of dethiobiotin (DTB) to biotin by the insertion of a sulfur atom into dethiobiotin via a radical-based mechanism. This Acetivibrio thermocellus (strain ATCC 27405 / DSM 1237 / JCM 9322 / NBRC 103400 / NCIMB 10682 / NRRL B-4536 / VPI 7372) (Clostridium thermocellum) protein is Biotin synthase.